The chain runs to 975 residues: Translation initiation factor IF-2 (975 aa).

Composition is skewed to basic and acidic residues over residues 48-63 (DHLR…DKRK) and 120-177 (AELK…EAAA). 2 disordered regions span residues 48-85 (DHLR…KART) and 98-390 (KRDD…PTEP). Residues 178-211 (KRAAAAQAEAAQQAAAAREQAQRAQSEPAEQSAQ) show a composition bias toward low complexity. Basic and acidic residues predominate over residues 212–263 (DEARAAAERAAQREAAKKAEDAAREAADKARAEQEEIRKRREAAEAEARAIR). The segment covering 302 to 330 (KPAGEAAAARPAAKKPASGAPAPAAAPAG) has biased composition (low complexity). Residues 359 to 372 (SSGGVDRGWRGGPK) show a composition bias toward gly residues. In terms of domain architecture, tr-type G spans 475–644 (PRPPVVTVMG…LLQAEVLELK (170 aa)). Residues 484-491 (GHVDHGKT) are G1. 484–491 (GHVDHGKT) serves as a coordination point for GTP. Residues 509 to 513 (GITQH) are G2. A G3 region spans residues 530 to 533 (DTPG). Residues 530–534 (DTPGH) and 584–587 (NKID) contribute to the GTP site. The interval 584–587 (NKID) is G4. Positions 620–622 (SAK) are G5.

It belongs to the TRAFAC class translation factor GTPase superfamily. Classic translation factor GTPase family. IF-2 subfamily.

Its subcellular location is the cytoplasm. Functionally, one of the essential components for the initiation of protein synthesis. Protects formylmethionyl-tRNA from spontaneous hydrolysis and promotes its binding to the 30S ribosomal subunits. Also involved in the hydrolysis of GTP during the formation of the 70S ribosomal complex. The polypeptide is Translation initiation factor IF-2 (Burkholderia pseudomallei (strain 1106a)).